The chain runs to 203 residues: MFEGPVQDLIDELGKLPGIGPKSAQRIAFHLLSVEPPDIDRLTAVLAKVRDGVRFCAVCGNVSDDERCRICADPRRDGALVCVVEEPKDIQAVERTREYRGRYHVLGGAFDPLSGIGPEQLRIRELLTRIGDRVDGVDITEVIIATDPNTEGEATATYLVRMLRDIPGLTVTRIASGLPMGGDLEFADELTLGRALTGRRAMV.

The C4-type zinc-finger motif lies at 56–71 (CAVCGNVSDDERCRIC). Positions 79–179 (ALVCVVEEPK…TVTRIASGLP (101 aa)) constitute a Toprim domain.

It belongs to the RecR family.

May play a role in DNA repair. It seems to be involved in an RecBC-independent recombinational process of DNA repair. It may act with RecF and RecO. In Mycobacterium ulcerans (strain Agy99), this protein is Recombination protein RecR.